A 692-amino-acid polypeptide reads, in one-letter code: Methionine--tRNA ligase (692 aa).

Positions 12-22 match the 'HIGH' region motif; that stretch reads PYANGSFHIGH. The Zn(2+) site is built by Cys-143, Cys-146, Cys-156, and Cys-159. The short motif at 341-345 is the 'KMSKS' region element; that stretch reads KMSKS. Lys-344 contacts ATP. Residues 586–692 form the tRNA-binding domain; the sequence is DFAKIDLRIA…PGAQPGMRVR (107 aa).

It belongs to the class-I aminoacyl-tRNA synthetase family. MetG type 1 subfamily. As to quaternary structure, homodimer. It depends on Zn(2+) as a cofactor.

The protein localises to the cytoplasm. The catalysed reaction is tRNA(Met) + L-methionine + ATP = L-methionyl-tRNA(Met) + AMP + diphosphate. In terms of biological role, is required not only for elongation of protein synthesis but also for the initiation of all mRNA translation through initiator tRNA(fMet) aminoacylation. This Bordetella bronchiseptica (strain ATCC BAA-588 / NCTC 13252 / RB50) (Alcaligenes bronchisepticus) protein is Methionine--tRNA ligase.